Consider the following 532-residue polypeptide: Berberine bridge enzyme-like 23 (532 aa).

A signal peptide spans 1–22; sequence MRTLEAFALSLFLVFLVKWVNS. Cysteines 36 and 102 form a disulfide. An N-linked (GlcNAc...) asparagine glycan is attached at N78. One can recognise an FAD-binding PCMH-type domain in the interval 80 to 256; the sequence is TSQKPILIVT…LSWKVKLVRV (177 aa). Positions 117 to 180 form a cross-link, 6-(S-cysteinyl)-8alpha-(pros-histidyl)-FAD (His-Cys); the sequence is HDYEGLSYLS…KIHGFPAGTC (64 aa). N-linked (GlcNAc...) asparagine glycosylation is found at N272 and N487.

The protein belongs to the oxygen-dependent FAD-linked oxidoreductase family. The cofactor is FAD. The FAD cofactor is bound via a bicovalent 6-S-cysteinyl, 8alpha-N1-histidyl FAD linkage. Accumulates in cell walls of etiolated hypocotyls.

Its subcellular location is the secreted. The protein resides in the cell wall. This is Berberine bridge enzyme-like 23 from Arabidopsis thaliana (Mouse-ear cress).